The chain runs to 111 residues: Large ribosomal subunit protein uL23 (111 aa).

It belongs to the universal ribosomal protein uL23 family. Part of the 50S ribosomal subunit. Contacts protein L29, and trigger factor when it is bound to the ribosome.

Functionally, one of the early assembly proteins it binds 23S rRNA. One of the proteins that surrounds the polypeptide exit tunnel on the outside of the ribosome. Forms the main docking site for trigger factor binding to the ribosome. The chain is Large ribosomal subunit protein uL23 from Nitrosomonas eutropha (strain DSM 101675 / C91 / Nm57).